Reading from the N-terminus, the 686-residue chain is X-linked interleukin-1 receptor accessory protein-like 2 (686 aa).

The N-terminal stretch at 1–16 is a signal peptide; that stretch reads MKPPFLLALVVCSVVS. Residues 17 to 354 are Extracellular-facing; it reads TNLKMVSKRN…LLRKKDLIYK (338 aa). In terms of domain architecture, Ig-like C2-type 1 spans 18–132; the sequence is NLKMVSKRNS…YCMKVSMSLT (115 aa). An intrachain disulfide couples Cys53 to Cys116. N-linked (GlcNAc...) asparagine glycosylation is found at Asn63, Asn120, Asn136, Asn211, and Asn328. Ig-like C2-type domains lie at 141-232 and 239-347; these read CYNS…LKVT and PPKP…VLLR. 2 cysteine pairs are disulfide-bonded: Cys162/Cys214 and Cys265/Cys331. The chain crosses the membrane as a helical span at residues 355-375; the sequence is IELAGGLGAIFLLLVLLVVIY. Topologically, residues 376–686 are cytoplasmic; sequence KCYNIELMLF…KELSFTSDIW (311 aa). Residues 400–556 enclose the TIR domain; that stretch reads KEYDAYLSYT…KFWKHLVYEM (157 aa). Glu488 is a catalytic residue.

This sequence belongs to the interleukin-1 receptor family. Detected at low levels in fetal and adult brain, in particular in the frontal lobe, temporal lobe and cerebellum. Detected at very low levels in skin, liver, fetal ovary and in placenta.

It is found in the membrane. The enzyme catalyses NAD(+) + H2O = ADP-D-ribose + nicotinamide + H(+). In Homo sapiens (Human), this protein is X-linked interleukin-1 receptor accessory protein-like 2 (IL1RAPL2).